Reading from the N-terminus, the 236-residue chain is UPF0502 protein Bxeno_B1639 (236 aa).

This sequence belongs to the UPF0502 family.

This chain is UPF0502 protein Bxeno_B1639, found in Paraburkholderia xenovorans (strain LB400).